A 107-amino-acid polypeptide reads, in one-letter code: SH3 domain-binding glutamic acid-rich-like protein 2 (107 aa).

The SH3-binding signature appears at 61 to 67 (QGNPLPP).

This sequence belongs to the SH3BGR family.

It localises to the nucleus. The polypeptide is SH3 domain-binding glutamic acid-rich-like protein 2 (Sh3bgrl2) (Mus musculus (Mouse)).